Reading from the N-terminus, the 198-residue chain is Peptidyl-tRNA hydrolase (198 aa).

Tyr16 contributes to the tRNA binding site. Residue His21 is the Proton acceptor of the active site. Residues Phe67, Asn69, and Asn115 each coordinate tRNA.

This sequence belongs to the PTH family. In terms of assembly, monomer.

It localises to the cytoplasm. It carries out the reaction an N-acyl-L-alpha-aminoacyl-tRNA + H2O = an N-acyl-L-amino acid + a tRNA + H(+). Its function is as follows. Hydrolyzes ribosome-free peptidyl-tRNAs (with 1 or more amino acids incorporated), which drop off the ribosome during protein synthesis, or as a result of ribosome stalling. Catalyzes the release of premature peptidyl moieties from peptidyl-tRNA molecules trapped in stalled 50S ribosomal subunits, and thus maintains levels of free tRNAs and 50S ribosomes. This is Peptidyl-tRNA hydrolase from Prochlorococcus marinus (strain MIT 9301).